The primary structure comprises 884 residues: Protein argonaute-4 (884 aa).

Residues 242 to 361 (PVIEFMCEVL…LPLEVCNIVA (120 aa)) enclose the PAZ domain. The region spanning 532 to 843 (LIVVILPGKT…VAFRARYHLV (312 aa)) is the Piwi domain. A disordered region spans residues 848–870 (DSAEGSHVSGQSNGRDPQALAKA).

This sequence belongs to the argonaute family. Ago subfamily.

It localises to the cytoplasm. It is found in the P-body. Functionally, required for RNA-mediated gene silencing (RNAi). Binds to short RNAs such as microRNAs (miRNAs) and represses the translation of mRNAs which are complementary to them. Lacks endonuclease activity and does not appear to cleave target mRNAs. In Xenopus laevis (African clawed frog), this protein is Protein argonaute-4 (ago4).